A 425-amino-acid polypeptide reads, in one-letter code: Adenosine 3'-phospho 5'-phosphosulfate transporter 1 (425 aa).

Helical transmembrane passes span 27–47, 102–122, 147–167, 232–252, 263–283, 303–323, 342–360, 365–387, and 391–411; these read FLILLGYSTVATPAAILIYYV, VIILLLFFFSGIQVTLVAMGV, TQFLIFCNRIVALVLSLMILA, YSWFEYGCGCTIAFGASLFLL, ITYTSFSGMILMAGYLLFDAF, MMFGVNFFSAILCAVSLIEQG, VFLLSLSGAIGQIFIYSTI, PIVFAVIMTIRQMLSIVLSTIMY, and LTFLAAIGFMIVFAAIFVDIH.

This sequence belongs to the nucleotide-sugar transporter family. SLC35B subfamily.

Its subcellular location is the golgi apparatus membrane. In terms of biological role, mediates the transport of adenosine 3'-phospho 5'-phosphosulfate (PAPS), from cytosol into Golgi. PAPS is a universal sulfuryl donor for sulfation events that take place in the Golgi. This Caenorhabditis elegans protein is Adenosine 3'-phospho 5'-phosphosulfate transporter 1 (pst-1).